A 261-amino-acid polypeptide reads, in one-letter code: 4-hydroxy-tetrahydrodipicolinate reductase (261 aa).

Residues 11-16 (GFMGAM), 96-98 (GTT), and 122-125 (APNF) contribute to the NAD(+) site. The Proton donor/acceptor role is filled by H152. H153 is a binding site for (S)-2,3,4,5-tetrahydrodipicolinate. Residue K156 is the Proton donor of the active site. A (S)-2,3,4,5-tetrahydrodipicolinate-binding site is contributed by 162–163 (GT).

The protein belongs to the DapB family.

It localises to the cytoplasm. It catalyses the reaction (S)-2,3,4,5-tetrahydrodipicolinate + NAD(+) + H2O = (2S,4S)-4-hydroxy-2,3,4,5-tetrahydrodipicolinate + NADH + H(+). It carries out the reaction (S)-2,3,4,5-tetrahydrodipicolinate + NADP(+) + H2O = (2S,4S)-4-hydroxy-2,3,4,5-tetrahydrodipicolinate + NADPH + H(+). It functions in the pathway amino-acid biosynthesis; L-lysine biosynthesis via DAP pathway; (S)-tetrahydrodipicolinate from L-aspartate: step 4/4. Functionally, catalyzes the conversion of 4-hydroxy-tetrahydrodipicolinate (HTPA) to tetrahydrodipicolinate. This chain is 4-hydroxy-tetrahydrodipicolinate reductase, found in Lactobacillus helveticus (strain DPC 4571).